The chain runs to 220 residues: Ribose-5-phosphate isomerase A (220 aa).

Substrate-binding positions include 28–31, 81–84, and 94–97; these read TGST, DGAD, and KGGG. The active-site Proton acceptor is the Glu-103. Substrate is bound at residue Lys-121.

It belongs to the ribose 5-phosphate isomerase family. As to quaternary structure, homodimer.

The enzyme catalyses aldehydo-D-ribose 5-phosphate = D-ribulose 5-phosphate. It functions in the pathway carbohydrate degradation; pentose phosphate pathway; D-ribose 5-phosphate from D-ribulose 5-phosphate (non-oxidative stage): step 1/1. Functionally, catalyzes the reversible conversion of ribose-5-phosphate to ribulose 5-phosphate. This chain is Ribose-5-phosphate isomerase A, found in Yersinia enterocolitica serotype O:8 / biotype 1B (strain NCTC 13174 / 8081).